The primary structure comprises 392 residues: MENRTEMSQLRASKKDSKISHVLLMAIKLYLESGQPVGSKLLKETYCSDLSSATIRNYFAQLETDGFLRKNHISGGRIPTDLAFRYYADHCSPVLEQEEISIIQQKLKELPEYSKNIVKDLQKASEILSEILQLPVCFSSPRFESDSVTNIQLVSIDDLRVVFVLSTEFGQLFTDVLWLPEQLPENSLKRIESFLQNYLRKHPSSVPLSQKEEDLGMTLYNEVVVRYLTRYCHFSEEDLYQTGLSRLLKYEVFKDPETLAQGLSFFENRKHMCQLLNSHLHKKAPTTFIGRELSDIVGNADPSCAVITVPYYMDRTPLGAFGVLGPMNLPYQQVFGTLSLFTERLKTILTQSFYKFKLSFRRPCPTDPRCSQKPAELTRRSSIKLLPAKELT.

The protein belongs to the HrcA family.

In terms of biological role, negative regulator of class I heat shock genes (grpE-dnaK-dnaJ and groELS operons). Prevents heat-shock induction of these operons. The polypeptide is Heat-inducible transcription repressor HrcA (Chlamydia muridarum (strain MoPn / Nigg)).